Consider the following 131-residue polypeptide: Large ribosomal subunit protein uL22c (131 aa).

This sequence belongs to the universal ribosomal protein uL22 family. As to quaternary structure, part of the 50S ribosomal subunit.

It is found in the plastid. Its function is as follows. This protein binds specifically to 23S rRNA. In terms of biological role, the globular domain of the protein is located near the polypeptide exit tunnel on the outside of the subunit, while an extended beta-hairpin is found that lines the wall of the exit tunnel in the center of the 70S ribosome. In Aneura mirabilis (Parasitic liverwort), this protein is Large ribosomal subunit protein uL22c (rpl22).